The primary structure comprises 159 residues: Phosphopantetheine adenylyltransferase (159 aa).

Thr-10 provides a ligand contact to substrate. Residues 10-11 (TF) and His-18 each bind ATP. Positions 42, 74, and 88 each coordinate substrate. ATP contacts are provided by residues 89-91 (GLR), Glu-99, and 124-130 (WSFISSS).

The protein belongs to the bacterial CoaD family. As to quaternary structure, homohexamer. Mg(2+) is required as a cofactor.

It localises to the cytoplasm. The enzyme catalyses (R)-4'-phosphopantetheine + ATP + H(+) = 3'-dephospho-CoA + diphosphate. It functions in the pathway cofactor biosynthesis; coenzyme A biosynthesis; CoA from (R)-pantothenate: step 4/5. Functionally, reversibly transfers an adenylyl group from ATP to 4'-phosphopantetheine, yielding dephospho-CoA (dPCoA) and pyrophosphate. The sequence is that of Phosphopantetheine adenylyltransferase from Yersinia pseudotuberculosis serotype O:3 (strain YPIII).